The sequence spans 392 residues: 6-aminohexanoate-dimer hydrolase (392 aa).

A disordered region spans residues 1-22 (MNARSTGQHPARYPGAAAGEPT). S112 is a catalytic residue.

It carries out the reaction [N-(6-aminohexanoyl)](n) + H2O = [N-(6-aminohexanoyl)](n-1) + 6-aminohexanoate. The enzyme catalyses N-(6-aminohexanoyl)-6-aminohexanoate + H2O = 2 6-aminohexanoate. It participates in xenobiotic degradation; nylon-6 oligomer degradation. Functionally, involved in nylon oligomer degradation. In Paenarthrobacter ureafaciens, this protein is 6-aminohexanoate-dimer hydrolase.